We begin with the raw amino-acid sequence, 79 residues long: Sulfur carrier protein TusA (79 aa).

Cys16 serves as the catalytic Cysteine persulfide intermediate.

Belongs to the sulfur carrier protein TusA family.

Its subcellular location is the cytoplasm. In terms of biological role, sulfur carrier protein which probably makes part of a sulfur-relay system. This is Sulfur carrier protein TusA from Pseudomonas paraeruginosa (strain DSM 24068 / PA7) (Pseudomonas aeruginosa (strain PA7)).